A 565-amino-acid polypeptide reads, in one-letter code: uncharacterized protein (565 aa).

10 consecutive transmembrane segments (helical) span residues 28 to 48 (IFHFYIYCILLGAVLLFLPFA), 73 to 93 (ASYGFLDALFLAVSAFSDTGL), 109 to 129 (VLAILLQLGGIGFVVIAFLVW), 169 to 189 (LFLFMVELLYGFLYTILFYFI), 262 to 282 (IVIQWLAISQIIFGGIGYPVL), 315 to 335 (LIVTAWCFLMLLMVEFIVITS), 364 to 384 (SLIFGPIPAASRVMQLWFGVI), 393 to 413 (VFPWSAESDIIKGIMVIAMFI), 461 to 481 (AFLVAVFGLVSVVLIAILLPL), and 526 to 546 (TLGLLMIMGQVGVSSSVLTFV).

The protein belongs to the TrkH potassium transport family.

Its subcellular location is the cell membrane. This is an uncharacterized protein from Mycoplasma pneumoniae (strain ATCC 29342 / M129 / Subtype 1) (Mycoplasmoides pneumoniae).